A 274-amino-acid polypeptide reads, in one-letter code: Undecaprenyl-diphosphatase (274 aa).

The next 8 membrane-spanning stretches (helical) occupy residues 9-29, 47-67, 95-115, 120-140, 161-181, 197-217, 224-244, and 254-274; these read LEYL…FIPV, PGAS…AWYF, ILIG…FVPY, VLRS…FMYL, LIGF…GITI, FSFL…FISS, LGFF…LLAI, and NGLK…LLNL.

Belongs to the UppP family.

It is found in the cell inner membrane. The enzyme catalyses di-trans,octa-cis-undecaprenyl diphosphate + H2O = di-trans,octa-cis-undecaprenyl phosphate + phosphate + H(+). Catalyzes the dephosphorylation of undecaprenyl diphosphate (UPP). Confers resistance to bacitracin. This Prochlorococcus marinus (strain AS9601) protein is Undecaprenyl-diphosphatase.